Consider the following 270-residue polypeptide: Protein-ADP-ribose hydrolase (270 aa).

The Macro domain maps to 73-267; it reads VSVKDCQKTN…LYDTYLQKEN (195 aa). Residues D92, I93, and N106 each contribute to the ADP-D-ribose site. The Zn(2+) site is built by C112, H117, and C119. Positions 119, 120, 121, 212, 213, 214, 215, and 216 each coordinate ADP-D-ribose.

The protein belongs to the MacroD-type family. Zn-Macro subfamily. Requires Zn(2+) as cofactor.

The catalysed reaction is 4-O-(ADP-D-ribosyl)-L-aspartyl-[protein] + H2O = L-aspartyl-[protein] + ADP-D-ribose + H(+). In terms of biological role, ADP-ribosylhydrolase that specifically reverses the SirTM-mediated mono-ADP-ribosylation at an asparatate residue of GcvH-L, by releasing ADP-ribose from the target protein. May play a role in the regulation of the response to host-induced oxidative stress. This Streptococcus pyogenes serotype M6 (strain ATCC BAA-946 / MGAS10394) protein is Protein-ADP-ribose hydrolase.